The sequence spans 258 residues: Probable glycerol uptake facilitator protein (258 aa).

2 consecutive transmembrane segments (helical) span residues 11–31 (WWFL…NGAV) and 50–70 (TVAL…NAIF). The short motif at 77–79 (NPA) is the NPA 1 element. A run of 3 helical transmembrane segments spans residues 95–115 (ALIW…AMIA), 152–172 (FLTE…ASHF), and 180–200 (VPPG…FGGA). Positions 206-208 (NPA) match the NPA 2 motif. The chain crosses the membrane as a helical span at residues 233–253 (WIPVIAPLSAGLVLSIIIGFS).

It belongs to the MIP/aquaporin (TC 1.A.8) family.

The protein localises to the cell membrane. It catalyses the reaction glycerol(in) = glycerol(out). In terms of biological role, mediates glycerol diffusion across the cytoplasmic membrane via a pore-type mechanism. This is Probable glycerol uptake facilitator protein (glpF) from Mycoplasma genitalium (strain ATCC 33530 / DSM 19775 / NCTC 10195 / G37) (Mycoplasmoides genitalium).